The following is a 172-amino-acid chain: Cytochrome c oxidase subunit 4 isoform 2, mitochondrial (172 aa).

The N-terminal 34 residues, 1–34 (MFSRAARSLVMRTGLRTRGTGTHSPGDAAGSQRR), are a transit peptide targeting the mitochondrion. A compositionally biased stretch (low complexity) spans 13 to 22 (TGLRTRGTGT). Residues 13–32 (TGLRTRGTGTHSPGDAAGSQ) are disordered. The Mitochondrial matrix segment spans residues 35–101 (MTPYVDCYAQ…TFAEMNHRSN (67 aa)). Residues 102–127 (EWKTVMGCVFFFIGFTALVIWWQRVY) traverse the membrane as a helical segment. Residues 128-172 (VFPKKVVTLTEERKAQQLQRLLDMKSNPIQGLAAHWDYEKKEWKK) lie on the Mitochondrial intermembrane side of the membrane.

Belongs to the cytochrome c oxidase IV family. Component of the cytochrome c oxidase (complex IV, CIV), a multisubunit enzyme composed of 14 subunits. The complex is composed of a catalytic core of 3 subunits MT-CO1, MT-CO2 and MT-CO3, encoded in the mitochondrial DNA, and 11 supernumerary subunits COX4I, COX5A, COX5B, COX6A, COX6B, COX6C, COX7A, COX7B, COX7C, COX8 and NDUFA4, which are encoded in the nuclear genome. The complex exists as a monomer or a dimer and forms supercomplexes (SCs) in the inner mitochondrial membrane with NADH-ubiquinone oxidoreductase (complex I, CI) and ubiquinol-cytochrome c oxidoreductase (cytochrome b-c1 complex, complex III, CIII), resulting in different assemblies (supercomplex SCI(1)III(2)IV(1) and megacomplex MCI(2)III(2)IV(2)).

It localises to the mitochondrion inner membrane. It functions in the pathway energy metabolism; oxidative phosphorylation. In terms of biological role, component of the cytochrome c oxidase, the last enzyme in the mitochondrial electron transport chain which drives oxidative phosphorylation. The respiratory chain contains 3 multisubunit complexes succinate dehydrogenase (complex II, CII), ubiquinol-cytochrome c oxidoreductase (cytochrome b-c1 complex, complex III, CIII) and cytochrome c oxidase (complex IV, CIV), that cooperate to transfer electrons derived from NADH and succinate to molecular oxygen, creating an electrochemical gradient over the inner membrane that drives transmembrane transport and the ATP synthase. Cytochrome c oxidase is the component of the respiratory chain that catalyzes the reduction of oxygen to water. Electrons originating from reduced cytochrome c in the intermembrane space (IMS) are transferred via the dinuclear copper A center (CU(A)) of subunit 2 and heme A of subunit 1 to the active site in subunit 1, a binuclear center (BNC) formed by heme A3 and copper B (CU(B)). The BNC reduces molecular oxygen to 2 water molecules using 4 electrons from cytochrome c in the IMS and 4 protons from the mitochondrial matrix. This Mus musculus (Mouse) protein is Cytochrome c oxidase subunit 4 isoform 2, mitochondrial (Cox4i2).